The primary structure comprises 498 residues: Glycerol kinase (498 aa).

Residue Thr12 participates in ADP binding. Residues Thr12, Thr13, and Ser14 each coordinate ATP. Thr12 provides a ligand contact to sn-glycerol 3-phosphate. Residue Arg16 coordinates ADP. The sn-glycerol 3-phosphate site is built by Arg82, Glu83, Tyr134, and Asp243. 5 residues coordinate glycerol: Arg82, Glu83, Tyr134, Asp243, and Gln244. Residues Thr265 and Gly308 each contribute to the ADP site. ATP is bound by residues Thr265, Gly308, Gln312, and Gly409. Gly409 and Asn413 together coordinate ADP.

It belongs to the FGGY kinase family. In terms of assembly, homotetramer and homodimer (in equilibrium).

The catalysed reaction is glycerol + ATP = sn-glycerol 3-phosphate + ADP + H(+). Its pathway is polyol metabolism; glycerol degradation via glycerol kinase pathway; sn-glycerol 3-phosphate from glycerol: step 1/1. Its activity is regulated as follows. Activated by phosphorylation and inhibited by fructose 1,6-bisphosphate (FBP). Functionally, key enzyme in the regulation of glycerol uptake and metabolism. Catalyzes the phosphorylation of glycerol to yield sn-glycerol 3-phosphate. This chain is Glycerol kinase, found in Clostridium botulinum (strain Loch Maree / Type A3).